The chain runs to 434 residues: ATP-dependent protease ATPase subunit HslU (434 aa).

ATP is bound by residues valine 18, 60 to 65 (GVGKTE), aspartate 247, glutamate 312, and arginine 384.

This sequence belongs to the ClpX chaperone family. HslU subfamily. As to quaternary structure, a double ring-shaped homohexamer of HslV is capped on each side by a ring-shaped HslU homohexamer. The assembly of the HslU/HslV complex is dependent on binding of ATP.

The protein localises to the cytoplasm. Functionally, ATPase subunit of a proteasome-like degradation complex; this subunit has chaperone activity. The binding of ATP and its subsequent hydrolysis by HslU are essential for unfolding of protein substrates subsequently hydrolyzed by HslV. HslU recognizes the N-terminal part of its protein substrates and unfolds these before they are guided to HslV for hydrolysis. This Bradyrhizobium sp. (strain BTAi1 / ATCC BAA-1182) protein is ATP-dependent protease ATPase subunit HslU.